The following is a 185-amino-acid chain: Lipid A acyltransferase PagP (185 aa).

An N-terminal signal peptide occupies residues 1 to 14 (MKLKPVLYLLMLLG). A lipid anchor (N-palmitoyl cysteine) is attached at cysteine 15. A lipid anchor (S-diacylglycerol cysteine) is attached at cysteine 15. Residues histidine 57, aspartate 100, and serine 101 contribute to the active site.

The protein belongs to the lipid A palmitoyltransferase family. In terms of assembly, homodimer.

It localises to the cell outer membrane. The enzyme catalyses a lipid A + a 1,2-diacyl-sn-glycero-3-phosphocholine = a hepta-acyl lipid A + a 2-acyl-sn-glycero-3-phosphocholine. The catalysed reaction is a lipid IVA + a 1,2-diacyl-sn-glycero-3-phosphocholine = a lipid IVB + a 2-acyl-sn-glycero-3-phosphocholine. It catalyses the reaction a lipid IIA + a 1,2-diacyl-sn-glycero-3-phosphocholine = a lipid IIB + a 2-acyl-sn-glycero-3-phosphocholine. Its function is as follows. Transfers a fatty acid residue from the sn-1 position of a phospholipid to the N-linked hydroxyfatty acid chain on the proximal unit of lipid A or its precursors. The sequence is that of Lipid A acyltransferase PagP from Erwinia pyrifoliae (strain DSM 12163 / CIP 106111 / Ep16/96).